The sequence spans 312 residues: Dehydrin CAS31 (312 aa).

Disordered stretches follow at residues 1 to 88 (MSQY…HTGG) and 248 to 287 (GTEQ…HHGE). Positions 21–30 (PLTSQGQVDQ) are enriched in polar residues. The segment covering 35 to 46 (ISGGGMTGATGH) has biased composition (gly residues). Residues 55 to 66 (HGVGVDQTTGFG) are compositionally biased toward low complexity. Gly residues-rich tracts occupy residues 67-88 (SNTG…HTGG) and 256-278 (TGTG…GTTG).

The protein belongs to the plant dehydrin family. As to quaternary structure, interacts with the leghemoglobin LB120-1 in the cytoplasm; this interaction leads to LB120-1 protection from denaturation under thermal and drought stresses. As to expression, expressed in nodules and roots.

The protein localises to the cytoplasm. Intrinsically disordered protein acting as a chaperone. Ensures leghemoglobins (e.g. LB120-1) protection from denaturation under thermal and drought stresses to delay root nodule nitrogenase inactivation and subsequent nodule senescence, thus supporting symbiotic nitrogen fixation (SNF). The polypeptide is Dehydrin CAS31 (Medicago truncatula (Barrel medic)).